We begin with the raw amino-acid sequence, 431 residues long: tRNA-2-methylthio-N(6)-dimethylallyladenosine synthase (431 aa).

Positions 4-120 (RAVYIKTFGC…IENIIENQVS (117 aa)) constitute an MTTase N-terminal domain. The [4Fe-4S] cluster site is built by cysteine 13, cysteine 49, cysteine 83, cysteine 154, cysteine 158, and cysteine 161. A Radical SAM core domain is found at 140-367 (RKDCVKAWVN…LKLQDEITER (228 aa)). The TRAM domain maps to 370–430 (KRLEGKIQEV…RHSLEGDIIS (61 aa)).

The protein belongs to the methylthiotransferase family. MiaB subfamily. In terms of assembly, monomer. It depends on [4Fe-4S] cluster as a cofactor.

The protein localises to the cytoplasm. The catalysed reaction is N(6)-dimethylallyladenosine(37) in tRNA + (sulfur carrier)-SH + AH2 + 2 S-adenosyl-L-methionine = 2-methylsulfanyl-N(6)-dimethylallyladenosine(37) in tRNA + (sulfur carrier)-H + 5'-deoxyadenosine + L-methionine + A + S-adenosyl-L-homocysteine + 2 H(+). In terms of biological role, catalyzes the methylthiolation of N6-(dimethylallyl)adenosine (i(6)A), leading to the formation of 2-methylthio-N6-(dimethylallyl)adenosine (ms(2)i(6)A) at position 37 in tRNAs that read codons beginning with uridine. The sequence is that of tRNA-2-methylthio-N(6)-dimethylallyladenosine synthase from Thermodesulfovibrio yellowstonii (strain ATCC 51303 / DSM 11347 / YP87).